The chain runs to 238 residues: Dof zinc finger protein MNB1A (238 aa).

The span at 1–13 (MQEASSAAAAGAE) shows a compositional bias: low complexity. The interval 1-48 (MQEASSAAAAGAEPGRRAAQHQFAGVDLRRPKGYAAPAPAPAVGEGDP) is disordered. Residues 47–101 (DPCPRCASRDTKFCYYNNYNTSQPRHFCKGCRRYWTKGGTLRNVPVGGGTRKKPS) form a Dof-type zinc finger. Zn(2+) contacts are provided by cysteine 49, cysteine 52, cysteine 74, and cysteine 77. The disordered stretch occupies residues 85–155 (GTLRNVPVGG…TATTTTTTSE (71 aa)). The span at 119 to 130 (PKKKPASKKRRV) shows a compositional bias: basic residues. Positions 138–155 (ATAADPGKTATTTTTTSE) are enriched in low complexity.

Expressed in all tissues examined.

The protein resides in the nucleus. Transcription factor that binds specifically to a 5'-AA[AG]G-3' consensus core sequence at the MNF1-binding site. In Zea mays (Maize), this protein is Dof zinc finger protein MNB1A (MNB1A).